The chain runs to 593 residues: Cell surface glycoprotein (593 aa).

The first 22 residues, 1 to 22, serve as a signal peptide directing secretion; it reads MRKFTLLMLLLIVISMSGIAGA. N-linked (GalNAc...) asparagine glycans are attached at residues Asn-29, Asn-58, Asn-66, Asn-74, Asn-114, Asn-122, Asn-145, Asn-148, Asn-158, Asn-176, Asn-208, Asn-231, Asn-326, Asn-336, Asn-340, Asn-431, Asn-471, Asn-500, and Asn-516.

In terms of processing, N-glycosylated; contains glycans composed of methyl-Man, Man and GalNAc residues in a molar ratio of 2:3:1.

The protein resides in the secreted. Its subcellular location is the cell wall. It is found in the S-layer. Its function is as follows. The S-layer is a paracrystalline mono-layered assembly of proteins which coat the surface of the cell. The chain is Cell surface glycoprotein (slgA) from Methanothermus fervidus (strain ATCC 43054 / DSM 2088 / JCM 10308 / V24 S).